We begin with the raw amino-acid sequence, 253 residues long: Probable transcriptional regulatory protein Krad_3057 (253 aa).

This sequence belongs to the TACO1 family.

It localises to the cytoplasm. The polypeptide is Probable transcriptional regulatory protein Krad_3057 (Kineococcus radiotolerans (strain ATCC BAA-149 / DSM 14245 / SRS30216)).